A 722-amino-acid chain; its full sequence is MFNIHSVEIDWGGRPLKLETGKVARQADGAVVATYGETVVLATVVAAKAPREGVDFLPLTVDYQEKAYAAGRIPGGYFKREGRPTEKETLVSRLIDRPIRPLFADGWRNETQVIVTVLSHDMENDPDVLAMVAASAALTLSGVPFKGPIGAARVGFINDEYVLNPVLDEMAETQLELVVAGTADAVLMVESEAKELSEEIMLGAVMFGHRHFQPVIDAIIDLAEKAAKEPRELTVVDDSEIEKEMLGLVEQELRAAYAIPVKQDRYAAVGKVKEKAIAHFFPEGQEPKYDKLRIAGVFKELEAKIVRWNILDTGKRIDGRDSKTVRNILAQVGVLPRTHGSALFTRGETQAMVVTTLGTGEDEQYVDSLSGTYKETFLLHYNFPPYSVGETGRLGGTKRREIGHGKLAWRAIHPVLPPHHEFPYTIRVVSEITESNGSSSMASVCGASLALMDAGVPLKRPTAGIAMGLILEGERFAVLSDILGDEDHLGDMDFKVAGTEAGITSLQMDIKIAGITEEIMKVALGQAKDGRIHILGEMSKALDRARAELGEHAPRIETFKIPTDKIREVIGTGGKVIREIVEKTGAKVNIEDDGTVKVASSDGESIKAAIKWIKSIASDPEVGEIYEGTVVKVMEFGAFVNFFGAKDGLVHISQLAAGRVQKTSDVVKEGDKVKVKLLGFDDRGKTRLSMKVVDQTTGEDLEAKQKAEAKAEGEAPAQAAGE.

Mg(2+) contacts are provided by aspartate 487 and aspartate 493. In terms of domain architecture, KH spans 554–613 (PRIETFKIPTDKIREVIGTGGKVIREIVEKTGAKVNIEDDGTVKVASSDGESIKAAIKWI). The S1 motif domain maps to 623–691 (GEIYEGTVVK…DRGKTRLSMK (69 aa)). Residues 697–722 (TGEDLEAKQKAEAKAEGEAPAQAAGE) form a disordered region. Over residues 701 to 713 (LEAKQKAEAKAEG) the composition is skewed to basic and acidic residues.

The protein belongs to the polyribonucleotide nucleotidyltransferase family. Mg(2+) is required as a cofactor.

The protein resides in the cytoplasm. The catalysed reaction is RNA(n+1) + phosphate = RNA(n) + a ribonucleoside 5'-diphosphate. Functionally, involved in mRNA degradation. Catalyzes the phosphorolysis of single-stranded polyribonucleotides processively in the 3'- to 5'-direction. The polypeptide is Polyribonucleotide nucleotidyltransferase (Rhodopseudomonas palustris (strain ATCC BAA-98 / CGA009)).